Here is a 101-residue protein sequence, read N- to C-terminus: Ribonuclease kappa-A (101 aa).

2 helical membrane-spanning segments follow: residues 13 to 33 (ACGI…GVFF) and 68 to 88 (VSYN…FSFC).

Belongs to the RNase K family.

It is found in the membrane. In terms of biological role, endoribonuclease which preferentially cleaves ApU and ApG phosphodiester bonds. The protein is Ribonuclease kappa-A (rnasek-a) of Xenopus laevis (African clawed frog).